Here is a 491-residue protein sequence, read N- to C-terminus: Lysine--tRNA ligase (491 aa).

Mg(2+)-binding residues include E398 and E405.

This sequence belongs to the class-II aminoacyl-tRNA synthetase family. In terms of assembly, homodimer. Mg(2+) serves as cofactor.

It is found in the cytoplasm. The catalysed reaction is tRNA(Lys) + L-lysine + ATP = L-lysyl-tRNA(Lys) + AMP + diphosphate. This chain is Lysine--tRNA ligase, found in Mycoplasmopsis synoviae (strain 53) (Mycoplasma synoviae).